A 487-amino-acid polypeptide reads, in one-letter code: Protein nucleotidyltransferase YdiU (487 aa).

Residues Gly-90, Gly-92, Arg-93, Lys-113, Asp-125, Gly-126, Arg-176, and Arg-183 each contribute to the ATP site. The Proton acceptor role is filled by Asp-252. Mg(2+) contacts are provided by Asn-253 and Asp-262. Asp-262 provides a ligand contact to ATP.

Belongs to the SELO family. The cofactor is Mg(2+). Requires Mn(2+) as cofactor.

The enzyme catalyses L-seryl-[protein] + ATP = 3-O-(5'-adenylyl)-L-seryl-[protein] + diphosphate. It catalyses the reaction L-threonyl-[protein] + ATP = 3-O-(5'-adenylyl)-L-threonyl-[protein] + diphosphate. It carries out the reaction L-tyrosyl-[protein] + ATP = O-(5'-adenylyl)-L-tyrosyl-[protein] + diphosphate. The catalysed reaction is L-histidyl-[protein] + UTP = N(tele)-(5'-uridylyl)-L-histidyl-[protein] + diphosphate. The enzyme catalyses L-seryl-[protein] + UTP = O-(5'-uridylyl)-L-seryl-[protein] + diphosphate. It catalyses the reaction L-tyrosyl-[protein] + UTP = O-(5'-uridylyl)-L-tyrosyl-[protein] + diphosphate. Functionally, nucleotidyltransferase involved in the post-translational modification of proteins. It can catalyze the addition of adenosine monophosphate (AMP) or uridine monophosphate (UMP) to a protein, resulting in modifications known as AMPylation and UMPylation. The sequence is that of Protein nucleotidyltransferase YdiU from Pseudomonas fluorescens (strain ATCC BAA-477 / NRRL B-23932 / Pf-5).